The primary structure comprises 350 residues: MAPSPAPLLSLSLPELTDWVQTTGQPAYRGKQIHQWLYQKGARSLTAMTDLPKVWREKNVHYPIGRSVIDHCAVAPDHTRKYLLRLADGLIIETVGIPSSKRLTVCVSSQVGCAMDCNFCATGKGGFIRNLESHEIVDQVLTVQEEFHERVSNVVFMGMGEPLLNLPQVVKAVECLNQVVGIGQRALTISTVGLPGKIRQLADRHLQVTFAVSLHAPNQTLRQSLIPSARHYPLEQLLADCRAYVETTGRRVTFEYVLLAGVNDQPVHAEELAQKLRGFQTHVNLIPYNPISEVDYQRPTEAQINQFAQVLSDHRIAVSVRYSRGVQADAACGQLRASRKEELAELTPMA.

The active-site Proton acceptor is E93. Positions 99 to 327 (SSKRLTVCVS…VSVRYSRGVQ (229 aa)) constitute a Radical SAM core domain. The cysteines at positions 106 and 332 are disulfide-linked. The [4Fe-4S] cluster site is built by C113, C117, and C120. S-adenosyl-L-methionine is bound by residues 160 to 161 (GE), S190, 213 to 215 (SLH), and N289. Residue C332 is the S-methylcysteine intermediate of the active site.

This sequence belongs to the radical SAM superfamily. RlmN family. [4Fe-4S] cluster is required as a cofactor.

It is found in the cytoplasm. It carries out the reaction adenosine(2503) in 23S rRNA + 2 reduced [2Fe-2S]-[ferredoxin] + 2 S-adenosyl-L-methionine = 2-methyladenosine(2503) in 23S rRNA + 5'-deoxyadenosine + L-methionine + 2 oxidized [2Fe-2S]-[ferredoxin] + S-adenosyl-L-homocysteine. The enzyme catalyses adenosine(37) in tRNA + 2 reduced [2Fe-2S]-[ferredoxin] + 2 S-adenosyl-L-methionine = 2-methyladenosine(37) in tRNA + 5'-deoxyadenosine + L-methionine + 2 oxidized [2Fe-2S]-[ferredoxin] + S-adenosyl-L-homocysteine. Functionally, specifically methylates position 2 of adenine 2503 in 23S rRNA and position 2 of adenine 37 in tRNAs. This Synechocystis sp. (strain ATCC 27184 / PCC 6803 / Kazusa) protein is Probable dual-specificity RNA methyltransferase RlmN.